The primary structure comprises 216 residues: A-type ATP synthase subunit D (216 aa).

This sequence belongs to the V-ATPase D subunit family. As to quaternary structure, has multiple subunits with at least A(3), B(3), C, D, E, F, H, I and proteolipid K(x). In terms of processing, the N-terminus is blocked.

It localises to the cell membrane. Its function is as follows. Component of the A-type ATP synthase that produces ATP from ADP in the presence of a proton gradient across the membrane. The chain is A-type ATP synthase subunit D from Sulfurisphaera tokodaii (strain DSM 16993 / JCM 10545 / NBRC 100140 / 7) (Sulfolobus tokodaii).